Reading from the N-terminus, the 221-residue chain is Cysteine protease inhibitor 8 (221 aa).

Residues 1 to 26 form the signal peptide; sequence IPSINILSFLLLSSTLSLVAFARSFT. The propeptide occupies 27-42; it reads SENPIVLPTTCHDDDN. The Vacuolar targeting signal motif lies at 29–34; the sequence is NPIVLP. Cystine bridges form between Cys84–Cys136 and Cys184–Cys190.

The protein belongs to the protease inhibitor I3 (leguminous Kunitz-type inhibitor) family.

Its subcellular location is the vacuole. Functionally, inhibitor of cysteine proteases. May protect the plant by inhibiting proteases of invading organisms. This is Cysteine protease inhibitor 8 from Solanum tuberosum (Potato).